A 249-amino-acid polypeptide reads, in one-letter code: Putative NAD(+)--arginine ADP-ribosyltransferase Vis (249 aa).

The signal sequence occupies residues 1-18; the sequence is MNTRFLLLLCCLSFTTFS. The region spanning 31–223 is the TR mART core domain; it reads EEEVTQLAED…IGVETVKASA (193 aa). Residues 68–80, 117–120, and Glu-137 contribute to the NAD(+) site; these read SISGYQTANDYLR and RGTW. Arg-117 is an active-site residue. Residues Ser-142 and Glu-191 contribute to the active site. Glu-191 is a binding site for NAD(+).

This sequence belongs to the Arg-specific ADP-ribosyltransferase family.

It localises to the secreted. The enzyme catalyses L-arginyl-[protein] + NAD(+) = N(omega)-(ADP-D-ribosyl)-L-arginyl-[protein] + nicotinamide + H(+). Its function is as follows. A probable mono(ADP-ribosyl)transferase, it may ADP-ribosylate Arg in target protein(s). Upon expression in yeast cells causes cell death. This Vibrio splendidus (strain 12B01) protein is Putative NAD(+)--arginine ADP-ribosyltransferase Vis.